The following is a 98-amino-acid chain: Alpha-defensin 1 (98 aa).

The first 19 residues, 1-19 (MRTLTLLTALLLLALQVQT), serve as a signal peptide directing secretion. The propeptide occupies 20–63 (QSLEETADQVPAQDQPGAEAQDITISFAGDERSAREASKSLIGT). Cystine bridges form between cysteine 66–cysteine 96, cysteine 68–cysteine 84, and cysteine 74–cysteine 95.

It belongs to the alpha-defensin family. In terms of tissue distribution, paneth cells of the small bowel.

The protein localises to the secreted. Its function is as follows. Has broad-spectrum antimicrobial properties. The antimicrobial activity decreases in the present of salt in vitro. Binds anionic phospholipids, which leads to the aggregation of liposomes in vitro. Membrane permeabilization of the target cells is an essential part of the peptide's mode of antimicrobial activity. No hemolytic activity against sheep or horse erythrocytes. Has antibacterial activity against the bacterial horse pathogens Gram-positive R.equi ATCC 33701 P(-) (minimum bactericidal concentration or MBC=5 ug/ml) and R.equi ATCC 33701 P(+) (MBC=5 ug/ml), which are resistant against beta-lactam antibiotics. Also has antibacterial activity against highly infectious wild-type strain R.equi 85F P(+) (MBC=5 ug/ml), S.equi subsp. equi (MBC=5 ug/ml), S.equi subsp. zooepidemicus (MBC=5 ug/ml), S.dysgalactiae subsp. equisimilis (MBC=10 ug/ml), S.choleraesuis subsp. choleraesuis serovar Typhimurium (MBC=10 ug/ml), and P.multocida subsp. multocida (MBC=&gt;10 ug/ml). Probably contributes to the antimicrobial barrier function of the small bowel mucosa. The polypeptide is Alpha-defensin 1 (Equus caballus (Horse)).